We begin with the raw amino-acid sequence, 292 residues long: NAD kinase (292 aa).

Asp-73 serves as the catalytic Proton acceptor. NAD(+)-binding positions include 73–74 (DG), 147–148 (NE), His-158, Arg-175, Asp-177, 188–193 (TAYSLS), and Gln-247.

The protein belongs to the NAD kinase family. Requires a divalent metal cation as cofactor.

The protein resides in the cytoplasm. The catalysed reaction is NAD(+) + ATP = ADP + NADP(+) + H(+). Its function is as follows. Involved in the regulation of the intracellular balance of NAD and NADP, and is a key enzyme in the biosynthesis of NADP. Catalyzes specifically the phosphorylation on 2'-hydroxyl of the adenosine moiety of NAD to yield NADP. The sequence is that of NAD kinase from Escherichia coli (strain UTI89 / UPEC).